We begin with the raw amino-acid sequence, 336 residues long: Delta(1)-pyrroline-2-carboxylate reductase (336 aa).

The active-site Charge relay system is the serine 47. Catalysis depends on histidine 48, which acts as the Proton donor. Residue arginine 52 coordinates substrate. Residue 120–124 (HFSAL) coordinates NADP(+). Residue threonine 160 participates in substrate binding. 178–180 (DFA) contributes to the NADP(+) binding site. 186 to 187 (RG) contributes to the substrate binding site. Catalysis depends on aspartate 188, which acts as the Charge relay system. Residues 229–230 (HK) and 304–310 (RLPSQRR) contribute to the NADP(+) site.

This sequence belongs to the LDH2/MDH2 oxidoreductase family. Homodimer.

The catalysed reaction is L-proline + NAD(+) = 1-pyrroline-2-carboxylate + NADH + H(+). It carries out the reaction L-proline + NADP(+) = 1-pyrroline-2-carboxylate + NADPH + H(+). Catalyzes the reduction of Delta(1)-pyrroline-2-carboxylate (Pyr2C) to L-proline, using NADPH as the electron donor. May be involved in a degradation pathway that converts trans-3-hydroxy-L-proline (t3LHyp) to L-proline. This Pseudomonas fluorescens (strain ATCC BAA-477 / NRRL B-23932 / Pf-5) protein is Delta(1)-pyrroline-2-carboxylate reductase.